A 291-amino-acid polypeptide reads, in one-letter code: MSALNWKPFVYGGLASITAECGTFPIDLTKTRLQIQGQTNDAKFREIRYRGMLHALMRIGREEGLRALYSGIAPAMLRQASYGTIKIGTYQSLKRLAVERPEDETLLINVVCGILSGVISSAIANPTDVLKIRMQAQNSAVQGGMIGNFISIYQQEGTRGLWKGVSLTAQRAAIVVGVELPVYDITKKHLILSGLMGDTVSTHFLSSFTCGLVGALASNPVDVVRTRMMNQRDLRDGRCSGYKGTLDCLLQTWKNEGFFALYKGFWPNWLRLGPWNIIFFLTYEQLKKLDL.

Position 2 is an N-acetylserine (Ser2). Solcar repeat units lie at residues 7-96 (KPFV…LKRL), 104-189 (ETLL…TKKH), and 198-289 (DTVS…LKKL). Helical transmembrane passes span 9–26 (FVYGGLASITAECGTFPI), 71–89 (GIAPAMLRQASYGTIKIGT), 106–124 (LLINVVCGILSGVISSAIA), 164–183 (GVSLTAQRAAIVVGVELPVY), 204–224 (FLSSFTCGLVGALASNPVDVV), and 264–283 (GFWPNWLRLGPWNIIFFLTY).

This sequence belongs to the mitochondrial carrier (TC 2.A.29) family. In terms of assembly, interacts with VDAC1.

It is found in the mitochondrion inner membrane. The enzyme catalyses sulfite(in) + sulfate(out) = sulfite(out) + sulfate(in). It carries out the reaction thiosulfate(in) + sulfate(out) = thiosulfate(out) + sulfate(in). It catalyses the reaction sulfate(out) + phosphate(in) = sulfate(in) + phosphate(out). The catalysed reaction is oxalate(in) + sulfate(out) = oxalate(out) + sulfate(in). The enzyme catalyses malonate(in) + sulfate(out) = malonate(out) + sulfate(in). It carries out the reaction maleate(in) + sulfate(out) = maleate(out) + sulfate(in). It catalyses the reaction (S)-malate(in) + sulfate(out) = (S)-malate(out) + sulfate(in). The catalysed reaction is (3S)-citramalate(in) + sulfate(out) = (3S)-citramalate(out) + sulfate(in). The enzyme catalyses (3R)-citramalate(in) + sulfate(out) = (3R)-citramalate(out) + sulfate(in). It carries out the reaction sulfate(out) + succinate(in) = sulfate(in) + succinate(out). It catalyses the reaction (S,S)-tartrate(in) + sulfate(out) = (S,S)-tartrate(out) + sulfate(in). The catalysed reaction is (2R,3R)-tartrate(in) + sulfate(out) = (2R,3R)-tartrate(out) + sulfate(in). The enzyme catalyses D-aspartate(in) + sulfate(out) = D-aspartate(out) + sulfate(in). It carries out the reaction L-aspartate(in) + sulfate(out) = L-aspartate(out) + sulfate(in). It catalyses the reaction sulfate(in) = sulfate(out). The catalysed reaction is phosphate(in) = phosphate(out). The enzyme catalyses (S)-malate(out) = (S)-malate(in). Its function is as follows. Antiporter that transports inorganic anions (sulfate, sulfite, thiosulfate and phosphate) and, to a lesser extent, a variety of dicarboxylates (e.g. malonate, malate and citramalate) and, even more so, aspartate. The sulfate/sulfate exchange is much higher than the phosphate/phosphate and malate/malate exchanges. The transport affinities is higher for sulfate and thiosulfate than for any other substrate. May catalyze the export of sulfite and thiosulfate (the hydrogen sulfide degradation products) from the mitochondria, thereby modulating the level of the hydrogen sulfide. Also may mediate a very low unidirectional transport of sulfate, phosphate and (S)-malate. This Rattus norvegicus (Rat) protein is Kidney mitochondrial carrier protein 1.